Here is a 210-residue protein sequence, read N- to C-terminus: Large ribosomal subunit protein uL3 (210 aa).

This sequence belongs to the universal ribosomal protein uL3 family. Part of the 50S ribosomal subunit. Forms a cluster with proteins L14 and L19.

Functionally, one of the primary rRNA binding proteins, it binds directly near the 3'-end of the 23S rRNA, where it nucleates assembly of the 50S subunit. The protein is Large ribosomal subunit protein uL3 of Caldicellulosiruptor saccharolyticus (strain ATCC 43494 / DSM 8903 / Tp8T 6331).